Consider the following 246-residue polypeptide: tRNA (guanine-N(7)-)-methyltransferase (246 aa).

The tract at residues M1–I26 is disordered. S-adenosyl-L-methionine is bound by residues E75, E100, D127, and D150. The active site involves D150. K154 is a binding site for substrate. Residues K156–R161 form an interaction with RNA region. Substrate is bound by residues D186 and T225–E228.

The protein belongs to the class I-like SAM-binding methyltransferase superfamily. TrmB family.

It carries out the reaction guanosine(46) in tRNA + S-adenosyl-L-methionine = N(7)-methylguanosine(46) in tRNA + S-adenosyl-L-homocysteine. Its pathway is tRNA modification; N(7)-methylguanine-tRNA biosynthesis. In terms of biological role, catalyzes the formation of N(7)-methylguanine at position 46 (m7G46) in tRNA. The protein is tRNA (guanine-N(7)-)-methyltransferase of Polaromonas sp. (strain JS666 / ATCC BAA-500).